A 204-amino-acid polypeptide reads, in one-letter code: Thiamine-phosphate synthase (204 aa).

4-amino-2-methyl-5-(diphosphooxymethyl)pyrimidine-binding positions include 35–39 and Asn67; that span reads QVREK. The Mg(2+) site is built by Asp68 and Asp87. Ser106 is a binding site for 4-amino-2-methyl-5-(diphosphooxymethyl)pyrimidine. 132–134 provides a ligand contact to 2-[(2R,5Z)-2-carboxy-4-methylthiazol-5(2H)-ylidene]ethyl phosphate; the sequence is TPT. Lys135 lines the 4-amino-2-methyl-5-(diphosphooxymethyl)pyrimidine pocket. Residues Gly163 and 183–184 contribute to the 2-[(2R,5Z)-2-carboxy-4-methylthiazol-5(2H)-ylidene]ethyl phosphate site; that span reads VS.

The protein belongs to the thiamine-phosphate synthase family. Mg(2+) serves as cofactor.

It catalyses the reaction 2-[(2R,5Z)-2-carboxy-4-methylthiazol-5(2H)-ylidene]ethyl phosphate + 4-amino-2-methyl-5-(diphosphooxymethyl)pyrimidine + 2 H(+) = thiamine phosphate + CO2 + diphosphate. The catalysed reaction is 2-(2-carboxy-4-methylthiazol-5-yl)ethyl phosphate + 4-amino-2-methyl-5-(diphosphooxymethyl)pyrimidine + 2 H(+) = thiamine phosphate + CO2 + diphosphate. The enzyme catalyses 4-methyl-5-(2-phosphooxyethyl)-thiazole + 4-amino-2-methyl-5-(diphosphooxymethyl)pyrimidine + H(+) = thiamine phosphate + diphosphate. Its pathway is cofactor biosynthesis; thiamine diphosphate biosynthesis; thiamine phosphate from 4-amino-2-methyl-5-diphosphomethylpyrimidine and 4-methyl-5-(2-phosphoethyl)-thiazole: step 1/1. In terms of biological role, condenses 4-methyl-5-(beta-hydroxyethyl)thiazole monophosphate (THZ-P) and 2-methyl-4-amino-5-hydroxymethyl pyrimidine pyrophosphate (HMP-PP) to form thiamine monophosphate (TMP). This chain is Thiamine-phosphate synthase, found in Vibrio campbellii (strain ATCC BAA-1116).